Reading from the N-terminus, the 463-residue chain is L-cystine uptake protein TcyP (463 aa).

10 helical membrane passes run 3 to 23, 34 to 54, 73 to 93, 105 to 125, 184 to 204, 225 to 245, 262 to 282, 338 to 358, 369 to 389, and 394 to 414; these read TLLV…LFVM, VFTA…IYGP, YVKL…LGAF, ISGL…AVGI, PTST…FLGV, IVMR…LAIM, MFVI…LLLL, LSIG…MMIA, VFII…AGVG, and FAAL…GLLI.

This sequence belongs to the dicarboxylate/amino acid:cation symporter (DAACS) (TC 2.A.23) family.

It is found in the cell membrane. Functionally, mediates uptake of L-cystine, the oxidized form of L-cysteine. Although it is more specific for L-cystine, it could also transport a much broader range of amino acids and sulfur compounds including S-methylcysteine. The protein is L-cystine uptake protein TcyP (tcyP) of Bacillus subtilis (strain 168).